A 387-amino-acid chain; its full sequence is Transcription termination/antitermination protein NusA (387 aa).

Positions 145–209 (GQVLTGVVTR…AKGPSLLVSR (65 aa)) constitute an S1 motif domain. The 68-residue stretch at 312-379 (AKKARVKVTK…ARERKAREEF (68 aa)) folds into the KH domain.

It belongs to the NusA family. In terms of assembly, monomer. Binds directly to the core enzyme of the DNA-dependent RNA polymerase and to nascent RNA.

It localises to the cytoplasm. Functionally, participates in both transcription termination and antitermination. In Thermus thermophilus (strain ATCC 27634 / DSM 579 / HB8), this protein is Transcription termination/antitermination protein NusA.